The following is a 234-amino-acid chain: MAKLTKRMRVIRDKVDVTKQYDINEAVALLKELATAKFVESVDVAVNLGIDARKSDQNVRGATVLPHGTGRSVRVAVFAQGANAEAAKEAGAELVGMDDLADQIKKGEMNFDVVIASPDAMRVVGQLGQILGPRGLMPNPKVGTVTPNVAEAVKNAKAGQVRYRNDKNGIIHTTIGKVDFDSDKLKENLESLVVALKKAKPATAKGIYIKKISLSTTMGAGVAIDQSGLTAVVN.

It belongs to the universal ribosomal protein uL1 family. Part of the 50S ribosomal subunit.

Binds directly to 23S rRNA. The L1 stalk is quite mobile in the ribosome, and is involved in E site tRNA release. In terms of biological role, protein L1 is also a translational repressor protein, it controls the translation of the L11 operon by binding to its mRNA. This chain is Large ribosomal subunit protein uL1, found in Yersinia pseudotuberculosis serotype O:1b (strain IP 31758).